Consider the following 25-residue polypeptide: Ocellatin-L1 (25 aa).

Leu25 carries the post-translational modification Leucine amide.

The protein belongs to the frog skin active peptide (FSAP) family. Ocellatin subfamily. Expressed by the skin glands.

The protein resides in the secreted. Antimicrobial peptide with activity against Gram-negative bacteria but without activity against Gram-positive bacteria. Shows a low activity in stimulating insulin release from rat BRIN-BD11 beta cells, and acts without loss of integrity of the plasma membrane. Has very low hemolytic activity. Shows weak amphipathicity in its alpha-helical conformation. The polypeptide is Ocellatin-L1 (Leptodactylus laticeps (Santa Fe frog)).